A 426-amino-acid chain; its full sequence is Histidine--tRNA ligase (426 aa).

This sequence belongs to the class-II aminoacyl-tRNA synthetase family. As to quaternary structure, homodimer.

The protein localises to the cytoplasm. The catalysed reaction is tRNA(His) + L-histidine + ATP = L-histidyl-tRNA(His) + AMP + diphosphate + H(+). This chain is Histidine--tRNA ligase, found in Streptococcus pyogenes serotype M1.